Here is a 104-residue protein sequence, read N- to C-terminus: MGTRLKVLRVFKDLHRTRRDVFRDDNRALTAARVKINEEFKKNKNETSDDNIKEMLKMARAVETILRESVIQAEHVDENKIVLRPRKSLLLENVPYCDAPSKKT.

This sequence belongs to the complex I LYR family. In terms of assembly, interacts with UQCRFS1.

It is found in the mitochondrion matrix. In terms of biological role, assembly factor required for Rieske Fe-S protein UQCRFS1 incorporation into the cytochrome b-c1 (CIII) complex. Functions as a chaperone, binding to this subunit within the mitochondrial matrix and stabilizing it prior to its translocation and insertion into the late CIII dimeric intermediate within the mitochondrial inner membrane. The chain is Complex III assembly factor LYRM7 (LYRM7) from Danio rerio (Zebrafish).